The primary structure comprises 414 residues: Ribulose bisphosphate carboxylase large chain (414 aa).

2 residues coordinate substrate: asparagine 102 and threonine 152. Lysine 154 serves as the catalytic Proton acceptor. Lysine 156 provides a ligand contact to substrate. 3 residues coordinate Mg(2+): lysine 180, aspartate 182, and glutamate 183. Lysine 180 carries the post-translational modification N6-carboxylysine. The active-site Proton acceptor is the histidine 273. Substrate-binding residues include arginine 274, histidine 306, and serine 358.

Belongs to the RuBisCO large chain family. Type I subfamily. In terms of assembly, heterohexadecamer of 8 large chains and 8 small chains; disulfide-linked. The disulfide link is formed within the large subunit homodimers. It depends on Mg(2+) as a cofactor. In terms of processing, the disulfide bond which can form in the large chain dimeric partners within the hexadecamer appears to be associated with oxidative stress and protein turnover.

It localises to the plastid. Its subcellular location is the chloroplast. It catalyses the reaction 2 (2R)-3-phosphoglycerate + 2 H(+) = D-ribulose 1,5-bisphosphate + CO2 + H2O. It carries out the reaction D-ribulose 1,5-bisphosphate + O2 = 2-phosphoglycolate + (2R)-3-phosphoglycerate + 2 H(+). RuBisCO catalyzes two reactions: the carboxylation of D-ribulose 1,5-bisphosphate, the primary event in carbon dioxide fixation, as well as the oxidative fragmentation of the pentose substrate in the photorespiration process. Both reactions occur simultaneously and in competition at the same active site. The chain is Ribulose bisphosphate carboxylase large chain (rbcL) from Antrophyum reticulatum (Ox-tongue fern).